A 501-amino-acid chain; its full sequence is Dipeptide and tripeptide permease A (501 aa).

Residues 1 to 21 (MSTANNKPAESVSLNAFKQPR) lie on the Cytoplasmic side of the membrane. The helical transmembrane segment at 22–44 (AFYLIFSIELWERFGYYGLQGIM) threads the bilayer. Topologically, residues 45-59 (AVYLVKQLGMSEADS) are periplasmic. Residues 60–80 (ITLFSSFSALVYGLVAIGGWL) form a helical membrane-spanning segment. Topologically, residues 81 to 89 (GDKVLGTKR) are cytoplasmic. Residues 90–110 (VIMLGAIVLAIGYALVAWSGH) form a helical membrane-spanning segment. Residue Asp111 is a topological domain, periplasmic. The helical transmembrane segment at 112–132 (AAIVYMGMATIAVGNGLFKAN) threads the bilayer. Over 133–153 (PSSLLSTCYDKNDPRLDGAFT) the chain is Cytoplasmic. Residues 154 to 174 (MYYMSINIGSFFSMLATPWLA) form a helical membrane-spanning segment. Residues 175-178 (ARFG) are Periplasmic-facing. A helical transmembrane segment spans residues 179-199 (WSVAFALSVVGMVITIINFAF). At 200–218 (CQKWVKQYGSKPDFAPVHM) the chain is on the cytoplasmic side. A helical membrane pass occupies residues 219-239 (GKLLATIAGVVVLVAIATWLL). Residues 240-246 (HNQGIAR) are Periplasmic-facing. The helical transmembrane segment at 247–267 (MVLGVVALGIVVIFAKETIGL) threads the bilayer. The Cytoplasmic segment spans residues 268 to 274 (KGAARRK). The chain crosses the membrane as a helical span at residues 275–295 (MIVAFLLMVEAIVFFVLYSQM). The Periplasmic portion of the chain corresponds to 296–320 (PTSLNFFAIRNVEHSILGIAFEPEQ). Residues 321–341 (YQALNPFWIMIGSPILAAIYN) form a helical membrane-spanning segment. The Cytoplasmic portion of the chain corresponds to 342–352 (KMGDRLPMPHK). Residues 353–373 (FAIGMVLCSGAFLVLPLGAKF) traverse the membrane as a helical segment. At 374 to 383 (ASDAGIVSVN) the chain is on the periplasmic side. The helical transmembrane segment at 384–404 (WLILSYALQSIGELMISGLGL) threads the bilayer. Residues 405–414 (AMVAQLVPQR) are Cytoplasmic-facing. Residues 415 to 435 (LMGFIMGSWFLTTAGAAIIAG) traverse the membrane as a helical segment. Residues 436–459 (KIANLMAVPENVTDPLVSLEVYGH) are Periplasmic-facing. A helical membrane pass occupies residues 460 to 480 (VFLQIGIVTAVIAALMLLTAP). The Cytoplasmic segment spans residues 481 to 501 (KLNRMTQDDSADLKARETAAA).

It belongs to the major facilitator superfamily. Proton-dependent oligopeptide transporter (POT/PTR) (TC 2.A.17) family. DtpA subfamily.

The protein resides in the cell inner membrane. In terms of biological role, proton-dependent permease that transports di- and tripeptides. The sequence is that of Dipeptide and tripeptide permease A from Klebsiella pneumoniae (strain 342).